Reading from the N-terminus, the 246-residue chain is Probable septum site-determining protein MinC (246 aa).

This sequence belongs to the MinC family. In terms of assembly, interacts with MinD and FtsZ.

Functionally, cell division inhibitor that blocks the formation of polar Z ring septums. Rapidly oscillates between the poles of the cell to destabilize FtsZ filaments that have formed before they mature into polar Z rings. Prevents FtsZ polymerization. The chain is Probable septum site-determining protein MinC from Pseudomonas savastanoi pv. phaseolicola (strain 1448A / Race 6) (Pseudomonas syringae pv. phaseolicola (strain 1448A / Race 6)).